The sequence spans 112 residues: Cryptic phage CTXphi transcriptional repressor RstR (112 aa).

An HTH cro/C1-type domain is found at 7–61 (LANQRKAINKTQAQMADEIGISLTSYKKYESGEGLPTMENLVKIADALEISIDEL). Residues 18–37 (QAQMADEIGISLTSYKKYES) constitute a DNA-binding region (H-T-H motif).

Functionally, transcriptional repressor of the integrated CTXPhi phage gene rstA2. The protein is Cryptic phage CTXphi transcriptional repressor RstR (rstR1) of Vibrio cholerae serotype O1 (strain ATCC 39315 / El Tor Inaba N16961).